Consider the following 352-residue polypeptide: Molybdenum import ATP-binding protein ModC (352 aa).

The ABC transporter domain occupies 1-229; it reads MLELNFSQTL…SVMNPWLPKE (229 aa). 31–38 provides a ligand contact to ATP; that stretch reads GVSGAGKT. The Mop domain occupies 289 to 352; that stretch reads QTSIRNVLRA…AQIKSVSITA (64 aa).

The protein belongs to the ABC transporter superfamily. Molybdate importer (TC 3.A.1.8) family. The complex is composed of two ATP-binding proteins (ModC), two transmembrane proteins (ModB) and a solute-binding protein (ModA).

The protein localises to the cell inner membrane. The catalysed reaction is molybdate(out) + ATP + H2O = molybdate(in) + ADP + phosphate + H(+). In terms of biological role, part of the ABC transporter complex ModABC involved in molybdenum import. Responsible for energy coupling to the transport system. The chain is Molybdenum import ATP-binding protein ModC from Escherichia coli O6:K15:H31 (strain 536 / UPEC).